An 802-amino-acid chain; its full sequence is Pyrophosphate-energized membrane proton pump 2 (802 aa).

The next 6 membrane-spanning stretches (helical) occupy residues 45–65 (VLSI…ASTS), 66–86 (PIIV…IYLT), 118–138 (YSTI…IYLF), 160–180 (VAAF…GMWV), 206–226 (AGGF…AILY), and 246–266 (LPLL…FAQL). Substrate is bound at residue K273. Mg(2+) contacts are provided by D276, D280, and D306. Transmembrane regions (helical) follow at residues 348-368 (FILF…IGIL), 386-406 (MAVL…TFGA), 421-441 (WFNF…FVWI), 468-488 (IIAG…TISV), and 511-531 (GGLF…AYVL). Mg(2+) is bound by residues D541 and N568. The next 4 helical transmembrane spans lie at 577–597 (FAIG…MDEV), 615–635 (VFVG…WACA), 686–706 (GALA…LGYY), and 716–736 (VVAS…LFLN). Mg(2+)-binding residues include D743 and D773. Substrate is bound at residue K776. The helical transmembrane segment at 782 to 802 (SIHVLIKMLATITLVMAPVFL) threads the bilayer.

It belongs to the H(+)-translocating pyrophosphatase (TC 3.A.10) family. K(+)-insensitive subfamily. As to quaternary structure, monomer. Ubiquitous. Mostly expressed in cotyledons, roots and flowers. Especially high levels in trichomes, sepals and stamen filaments.

The protein localises to the golgi apparatus membrane. The enzyme catalyses diphosphate + H2O + H(+)(in) = 2 phosphate + 2 H(+)(out). With respect to regulation, activated by Mg(+) but not by K(+). Inhibited by Ca(2+). Functionally, pyrophosphatase active in both inorganic pyrophosphate hydrolysis and H(+) translocation. The chain is Pyrophosphate-energized membrane proton pump 2 (AVPL1) from Arabidopsis thaliana (Mouse-ear cress).